The primary structure comprises 354 residues: Selenide, water dikinase (354 aa).

The active site involves C23. ATP is bound by residues K26 and 54–56; that span reads TAD. Mg(2+) is bound at residue D57. ATP contacts are provided by residues D74, D97, and 145 to 147; that span reads GHS. D97 serves as a coordination point for Mg(2+). Mg(2+) is bound at residue D233.

This sequence belongs to the selenophosphate synthase 1 family. Class I subfamily. In terms of assembly, homodimer. Requires Mg(2+) as cofactor.

The enzyme catalyses hydrogenselenide + ATP + H2O = selenophosphate + AMP + phosphate + 2 H(+). Synthesizes selenophosphate from selenide and ATP. This Paraburkholderia xenovorans (strain LB400) protein is Selenide, water dikinase.